The chain runs to 279 residues: uncharacterized protein (279 aa).

Transmembrane regions (helical) follow at residues 31-51, 67-87, and 115-135; these read GYIA…FHAT, LLSI…AKII, and EITG…SLAL.

This sequence belongs to the transketolase family. The cofactor is thiamine diphosphate.

Its subcellular location is the cell membrane. This is an uncharacterized protein from Sinorhizobium fredii (strain NBRC 101917 / NGR234).